The sequence spans 55 residues: Neurotoxin X-29S (55 aa).

The signal sequence occupies residues 1–23 (MKIFFAVLVILVLFSMLIWTAYG). Intrachain disulfides connect Cys30-Cys45, Cys36-Cys50, and Cys39-Cys53.

In terms of tissue distribution, expressed by the venom gland.

It localises to the secreted. The protein is Neurotoxin X-29S of Olivierus martensii (Manchurian scorpion).